A 346-amino-acid chain; its full sequence is Cyclin-dependent kinase 20 (346 aa).

Residues 4–288 (YCILGRIGEG…ASKALLHQYF (285 aa)) enclose the Protein kinase domain. ATP is bound by residues 10–18 (IGEGAHGIV) and Lys-33. Asp-127 functions as the Proton acceptor in the catalytic mechanism.

Belongs to the protein kinase superfamily. CMGC Ser/Thr protein kinase family. CDC2/CDKX subfamily. As to quaternary structure, monomer. Interacts with TBC1D32. Interacts with MAK.

It is found in the nucleus. The protein resides in the cytoplasm. Its subcellular location is the cell projection. It localises to the cilium. The catalysed reaction is L-seryl-[protein] + ATP = O-phospho-L-seryl-[protein] + ADP + H(+). It catalyses the reaction L-threonyl-[protein] + ATP = O-phospho-L-threonyl-[protein] + ADP + H(+). Its function is as follows. Required for high-level Shh responses in the developing neural tube. Together with TBC1D32, controls the structure of the primary cilium by coordinating assembly of the ciliary membrane and axoneme, allowing GLI2 to be properly activated in response to SHH signaling. Involved in cell growth. Activates CDK2, a kinase involved in the control of the cell cycle, by phosphorylating residue 'Thr-160'. The sequence is that of Cyclin-dependent kinase 20 (CDK20) from Homo sapiens (Human).